We begin with the raw amino-acid sequence, 293 residues long: Non-homologous end joining protein Ku (293 aa).

The 186-residue stretch at Ile10 to Ala195 folds into the Ku domain. The segment at Ser216–Lys229 is required for dimerization. The disordered stretch occupies residues Arg260–Ala293. Basic and acidic residues predominate over residues Gly265–Gly280.

This sequence belongs to the prokaryotic Ku family. As to quaternary structure, homodimer, may form higher-order multimers on DNA. Non-dimerized protein does not stimulate LigD ligase activity. Probably interacts with LigD.

Its function is as follows. With LigD forms a non-homologous end joining (NHEJ) DNA repair enzyme, which repairs dsDNA breaks with reduced fidelity. Stimulates rNTP addition to DSB and end joining (ligation) of linear DNA by LigD, on 3'-overhangs and probably also 5'-overhangs and blunt dsDNA breaks. Binds both ends of linear dsDNA protecting it from exonuclease activity. The protein is Non-homologous end joining protein Ku of Pseudomonas aeruginosa (strain ATCC 15692 / DSM 22644 / CIP 104116 / JCM 14847 / LMG 12228 / 1C / PRS 101 / PAO1).